The primary structure comprises 432 residues: Mitochondrial distribution and morphology protein 12 (432 aa).

In terms of domain architecture, SMP-LTD spans 1 to 432 (MSIEVDWRAA…VFPSFWTFLI (432 aa)). Disordered regions lie at residues 182 to 273 (WTDP…PRMR) and 354 to 377 (QQEA…PKRQ). Positions 214–234 (TSNPTSRPSTSSTLPSHPSAS) are enriched in low complexity. Composition is skewed to basic and acidic residues over residues 243-253 (TGKEHGSLAED) and 355-364 (QEARGQDDRP).

Belongs to the MDM12 family. In terms of assembly, component of the ER-mitochondria encounter structure (ERMES) or MDM complex, composed of mmm1, mdm10, mdm12 and mdm34. A mmm1 homodimer associates with one molecule of mdm12 on each side in a pairwise head-to-tail manner, and the SMP-LTD domains of mmm1 and mdm12 generate a continuous hydrophobic tunnel for phospholipid trafficking.

It localises to the mitochondrion outer membrane. It is found in the endoplasmic reticulum membrane. Its function is as follows. Component of the ERMES/MDM complex, which serves as a molecular tether to connect the endoplasmic reticulum (ER) and mitochondria. Components of this complex are involved in the control of mitochondrial shape and protein biogenesis, and function in nonvesicular lipid trafficking between the ER and mitochondria. Mdm12 is required for the interaction of the ER-resident membrane protein MMM1 and the outer mitochondrial membrane-resident beta-barrel protein mdm10. The mdm12-mmm1 subcomplex functions in the major beta-barrel assembly pathway that is responsible for biogenesis of all mitochondrial outer membrane beta-barrel proteins, and acts in a late step after the SAM complex. The mdm10-mdm12-mmm1 subcomplex further acts in the TOM40-specific pathway after the action of the mdm12-mmm1 complex. Essential for establishing and maintaining the structure of mitochondria and maintenance of mtDNA nucleoids. This chain is Mitochondrial distribution and morphology protein 12, found in Aspergillus flavus (strain ATCC 200026 / FGSC A1120 / IAM 13836 / NRRL 3357 / JCM 12722 / SRRC 167).